Here is a 422-residue protein sequence, read N- to C-terminus: 3-phosphoshikimate 1-carboxyvinyltransferase (422 aa).

3 residues coordinate 3-phosphoshikimate: Lys20, Ser21, and Arg25. A phosphoenolpyruvate-binding site is contributed by Lys20. 2 residues coordinate phosphoenolpyruvate: Gly90 and Arg118. Positions 161, 162, 163, 189, 305, and 332 each coordinate 3-phosphoshikimate. Gln163 serves as a coordination point for phosphoenolpyruvate. Asp305 (proton acceptor) is an active-site residue. Phosphoenolpyruvate contacts are provided by Arg336 and Arg378.

This sequence belongs to the EPSP synthase family. As to quaternary structure, monomer.

The protein resides in the cytoplasm. It catalyses the reaction 3-phosphoshikimate + phosphoenolpyruvate = 5-O-(1-carboxyvinyl)-3-phosphoshikimate + phosphate. It participates in metabolic intermediate biosynthesis; chorismate biosynthesis. Functionally, catalyzes the transfer of the enolpyruvyl moiety of phosphoenolpyruvate (PEP) to the 5-hydroxyl of shikimate-3-phosphate (S3P) to produce enolpyruvyl shikimate-3-phosphate and inorganic phosphate. In Nitrosopumilus maritimus (strain SCM1), this protein is 3-phosphoshikimate 1-carboxyvinyltransferase.